The chain runs to 88 residues: Small ribosomal subunit protein bS16 (88 aa).

Belongs to the bacterial ribosomal protein bS16 family.

This Geobacter sp. (strain M21) protein is Small ribosomal subunit protein bS16.